The chain runs to 149 residues: Nucleoside diphosphate kinase (149 aa).

ATP-binding residues include lysine 9, phenylalanine 57, arginine 85, threonine 91, arginine 102, and asparagine 112. The active-site Pros-phosphohistidine intermediate is histidine 115.

It belongs to the NDK family. As to quaternary structure, homotetramer. Requires Mg(2+) as cofactor.

It is found in the cytoplasm. The catalysed reaction is a 2'-deoxyribonucleoside 5'-diphosphate + ATP = a 2'-deoxyribonucleoside 5'-triphosphate + ADP. It carries out the reaction a ribonucleoside 5'-diphosphate + ATP = a ribonucleoside 5'-triphosphate + ADP. Its function is as follows. Major role in the synthesis of nucleoside triphosphates other than ATP. The ATP gamma phosphate is transferred to the NDP beta phosphate via a ping-pong mechanism, using a phosphorylated active-site intermediate. The chain is Nucleoside diphosphate kinase from Roseiflexus sp. (strain RS-1).